We begin with the raw amino-acid sequence, 491 residues long: Transcription factor unc-3 (491 aa).

An interaction with DNA region spans residues 66–69; that stretch reads RKSN. The C5-type zinc-finger motif lies at 154–173; it reads CRVLLTHEVMCSRCCEKKSC. Interaction with DNA stretches follow at residues 200-207 and 239-242; these read NCLKNAGN and NNSK. Residues 240–261 are disordered; the sequence is NSKHGRRTKRTDASDDSEYSES. The 87-residue stretch at 269 to 355 folds into the IPT/TIG domain; the sequence is PVIKALFPSE…SRGTPLRFSY (87 aa).

It belongs to the COE family. May homodimerise. Interacts with jmjd-3.1. May interact with GFI1 homolog pag-3.

Its subcellular location is the nucleus. Functionally, transcription factor. Involved in motor neuron fate determination and maintenance, acting as an activator of gene expression in a subset of motor neurons. May act in concert with GFI1 homolog pag-3 in motor neuron fate determination. Required to maintain the expression of transcriptional repressors bnc-1 and cfi-1, which play roles in the cell fate of motor neurons. May play a role in the expression of proteins essential for axonal pathfinding and/or neuronal differentiation in both sensory and motor neurons. Cooperates with jmjd-3.1 and wdr-5.1 to ensure robust transdifferentiation of the Y rectal cell to the PDA motor neuron during larval development. In Caenorhabditis elegans, this protein is Transcription factor unc-3 (unc-3).